A 101-amino-acid polypeptide reads, in one-letter code: Small ribosomal subunit protein uS10 (101 aa).

The protein belongs to the universal ribosomal protein uS10 family. As to quaternary structure, part of the 30S ribosomal subunit.

Involved in the binding of tRNA to the ribosomes. The chain is Small ribosomal subunit protein uS10 from Flavobacterium psychrophilum (strain ATCC 49511 / DSM 21280 / CIP 103535 / JIP02/86).